We begin with the raw amino-acid sequence, 194 residues long: MSDSFSLLPLPLVSQRYAHALFDLVQKEGYVGDVEKALASFQVILEQDKALKHLVQSPFLSVKEQVKAVCAVCENLGLAHKKAGQILRNFLCVVAANRRLSALSGILQAFQRRVALSRGEVSAQVISAHPLDADQKKELCVALESVVGGKVTLRLSVDPAILGGLIVRLGLYQIDTSLATQLSSLKLALKKEVS.

It belongs to the ATPase delta chain family. As to quaternary structure, F-type ATPases have 2 components, F(1) - the catalytic core - and F(0) - the membrane proton channel. F(1) has five subunits: alpha(3), beta(3), gamma(1), delta(1), epsilon(1). F(0) has three main subunits: a(1), b(2) and c(10-14). The alpha and beta chains form an alternating ring which encloses part of the gamma chain. F(1) is attached to F(0) by a central stalk formed by the gamma and epsilon chains, while a peripheral stalk is formed by the delta and b chains.

It localises to the cell inner membrane. Its function is as follows. F(1)F(0) ATP synthase produces ATP from ADP in the presence of a proton or sodium gradient. F-type ATPases consist of two structural domains, F(1) containing the extramembraneous catalytic core and F(0) containing the membrane proton channel, linked together by a central stalk and a peripheral stalk. During catalysis, ATP synthesis in the catalytic domain of F(1) is coupled via a rotary mechanism of the central stalk subunits to proton translocation. This protein is part of the stalk that links CF(0) to CF(1). It either transmits conformational changes from CF(0) to CF(1) or is implicated in proton conduction. The polypeptide is ATP synthase subunit delta (Bartonella bacilliformis (strain ATCC 35685 / KC583 / Herrer 020/F12,63)).